A 139-amino-acid chain; its full sequence is Spermatogenesis-associated protein 33 (139 aa).

The segment at 1–67 is interaction with ATG16L1; the sequence is MVTHAAGART…TAKHPPPAAS (67 aa). The segment at 1-83 is disordered; it reads MVTHAAGART…VKQKSSRKKV (83 aa). The segment covering 25–50 has biased composition (basic and acidic residues); it reads KSKEKLMEKHSQEARQADRESEKPVD. The segment at 68-139 is interaction with VDAC2; the sequence is LEEKPDVKQK…ADAYNSHLKE (72 aa). The PQIIIT signature appears at 86–91; that stretch reads PQIIIT. Position 94 is a phosphoserine (Ser94). A compositionally biased stretch (polar residues) spans 97 to 109; that stretch reads TLVSCSSSGSDQQ. Positions 97-139 are disordered; it reads TLVSCSSSGSDQQRTIREPEDWGPYRRHRNPSTADAYNSHLKE. Basic and acidic residues predominate over residues 110–120; that stretch reads RTIREPEDWGP.

As to quaternary structure, interacts (via PQIIIT motif) with PPP3R1, PPP3R2, PPP3CA, PPP3CB and PPP3CC. Interacts with VDAC2. Interacts with ATG16L1 (via WD repeats).

The protein resides in the cytoplasm. The protein localises to the cytosol. It is found in the nucleus. It localises to the mitochondrion. Its function is as follows. Plays an important role in sperm motility and male fertility. Required for sperm midpiece flexibility and for the localization of sperm calcineurin to the mitochondria. Promotes mitophagy as well as acts as an autophagy mediator in male germline cells. Links damaged mitochondria to autophagosomes via its binding to the outer mitochondrial membrane protein VDAC2, as well as to key autophagy machinery component ATG16L1. This Homo sapiens (Human) protein is Spermatogenesis-associated protein 33 (SPATA33).